A 374-amino-acid polypeptide reads, in one-letter code: Pulmonary surfactant-associated protein D (374 aa).

The N-terminal stretch at 1–19 (MLHFLSMLVLLVQPLGDLG) is a signal peptide. Cys-34 and Cys-39 each carry S-nitrosocysteine. Residues 40–221 (SPTENGLPGR…RGIKGESGLP (182 aa)) form a disordered region. Residues 45–221 (GLPGRDGRDG…RGIKGESGLP (177 aa)) form the Collagen-like domain. Over residues 49 to 64 (RDGRDGREGPRGEKGD) the composition is skewed to basic and acidic residues. Hydroxyproline is present on Pro-77. Lys-86 is modified (5-hydroxylysine). Residue Asn-89 is glycosylated (N-linked (GlcNAc...) asparagine). Position 95 is a hydroxyproline (Pro-95). The residue at position 98 (Lys-98) is a 5-hydroxylysine. Residue Ser-109 is modified to Phosphoserine. Low complexity-rich tracts occupy residues 137 to 163 (KGEA…PAGP) and 170 to 200 (PGEQ…RGPP). Pro-170 and Pro-176 each carry hydroxyproline. Positions 203–215 (KGDRGAPGDRGIK) are enriched in basic and acidic residues. A coiled-coil region spans residues 222-253 (DSAALRQQMEALNGKLQRLEAAFSRYKKAALF). The C-type lectin domain maps to 259–374 (VGDKIFRAAN…GEQRLVICEF (116 aa)). 2 cysteine pairs are disulfide-bonded: Cys-280-Cys-372 and Cys-350-Cys-364.

It belongs to the SFTPD family. Oligomeric complex of 4 set of homotrimers. Post-translationally, S-nitrosylation at Cys-34 and Cys-39 alters the quaternary structure which results in a pro-inflammatory chemoattractive signaling activity with macrophages.

Its subcellular location is the secreted. It localises to the extracellular space. It is found in the extracellular matrix. The protein localises to the surface film. Functionally, contributes to the lung's defense against inhaled microorganisms, organic antigens and toxins. Interacts with compounds such as bacterial lipopolysaccharides, oligosaccharides and fatty acids and modulates leukocyte action in immune response. May participate in the extracellular reorganization or turnover of pulmonary surfactant. Binds strongly maltose residues and to a lesser extent other alpha-glucosyl moieties. This chain is Pulmonary surfactant-associated protein D (Sftpd), found in Rattus norvegicus (Rat).